The sequence spans 250 residues: 5'-nucleotidase SurE (250 aa).

Residues Asp-8, Asp-9, Ser-39, and Asn-91 each contribute to the a divalent metal cation site.

It belongs to the SurE nucleotidase family. A divalent metal cation serves as cofactor.

It localises to the cytoplasm. The catalysed reaction is a ribonucleoside 5'-phosphate + H2O = a ribonucleoside + phosphate. Its function is as follows. Nucleotidase that shows phosphatase activity on nucleoside 5'-monophosphates. This chain is 5'-nucleotidase SurE, found in Leptospira borgpetersenii serovar Hardjo-bovis (strain JB197).